We begin with the raw amino-acid sequence, 292 residues long: Homoserine kinase (292 aa).

Residue 84-94 (PLARGMGSSSA) coordinates ATP.

The protein belongs to the GHMP kinase family. Homoserine kinase subfamily.

It is found in the cytoplasm. The enzyme catalyses L-homoserine + ATP = O-phospho-L-homoserine + ADP + H(+). It functions in the pathway amino-acid biosynthesis; L-threonine biosynthesis; L-threonine from L-aspartate: step 4/5. Catalyzes the ATP-dependent phosphorylation of L-homoserine to L-homoserine phosphate. This Thermus thermophilus (strain ATCC BAA-163 / DSM 7039 / HB27) protein is Homoserine kinase.